A 206-amino-acid chain; its full sequence is Large ribosomal subunit protein uL4 (206 aa).

Positions 46 to 95 are disordered; it reads GNRAQKTRAEVKHSTKKPWRQKGTGRARSGMTSSPLWRKGGRAFPNKPDE. Residues 59–70 are compositionally biased toward basic residues; sequence STKKPWRQKGTG.

This sequence belongs to the universal ribosomal protein uL4 family. In terms of assembly, part of the 50S ribosomal subunit.

Functionally, one of the primary rRNA binding proteins, this protein initially binds near the 5'-end of the 23S rRNA. It is important during the early stages of 50S assembly. It makes multiple contacts with different domains of the 23S rRNA in the assembled 50S subunit and ribosome. Its function is as follows. Forms part of the polypeptide exit tunnel. This is Large ribosomal subunit protein uL4 from Neisseria meningitidis serogroup C (strain 053442).